Reading from the N-terminus, the 597-residue chain is 66 kDa protein (597 aa).

5 disordered regions span residues 62 to 82 (VRLQ…PSLQ), 160 to 198 (HSVP…FRQH), 218 to 315 (NQLA…SCRV), 329 to 411 (HFKS…LHHD), and 535 to 586 (SSPQ…ASAL). Residues 64–80 (LQSSPPRGPQSDRNLPS) are compositionally biased toward polar residues. Positions 218–234 (NQLAQAQQHPLPSSKPL) are enriched in polar residues. A compositionally biased stretch (low complexity) spans 273–291 (PSSRGHLPSSTSSSSPRSN). Residues 305 to 315 (SNSQDLRSCRV) are compositionally biased toward polar residues. Basic residues predominate over residues 389–400 (QTHHARLPHSKR). Residues 535–574 (SSPQSHSSESLRGDSPPSSHLPSSPSSACSGDSFASCSSF) are compositionally biased toward low complexity. Over residues 575–584 (GPSNPTSSAS) the composition is skewed to polar residues.

The protein belongs to the tymoviridae protein p69 family.

The chain is 66 kDa protein from Ononis.